The following is a 338-amino-acid chain: Malate dehydrogenase, mitochondrial (338 aa).

A mitochondrion-targeting transit peptide spans 1-24 (MLSALARPAGAALRRSFSTSAQNN). Residues 31-37 (GASGGIG) and D57 contribute to the NAD(+) site. S33 is a glycosylation site (O-linked (GalNAc...) serine). Residues K78 and K91 each carry the N6-acetyllysine; alternate modification. An N6-succinyllysine; alternate mark is found at K78 and K91. Substrate-binding residues include R104 and R110. NAD(+) contacts are provided by residues N117 and 140–142 (ISN). N142 contributes to the substrate binding site. K165 carries the post-translational modification N6-acetyllysine. The active-site Proton relay is the D173. Residue R176 coordinates substrate. K185 carries the post-translational modification N6-acetyllysine; alternate. Position 185 is an N6-succinyllysine; alternate (K185). H200 acts as the Proton acceptor in catalysis. Residue K203 is modified to N6-succinyllysine. N6-acetyllysine; alternate occurs at positions 215 and 239. K215 and K239 each carry N6-succinyllysine; alternate. An N6-malonyllysine; alternate modification is found at K239. The residue at position 246 (S246) is a Phosphoserine. Residue M251 coordinates NAD(+). K269 carries the post-translational modification N6-succinyllysine. Residues K296, K301, K307, K314, and K324 each carry the N6-acetyllysine; alternate modification. N6-succinyllysine; alternate occurs at positions 296, 301, 307, 314, and 324. K307 is modified (N6-malonyllysine; alternate). S326 carries the phosphoserine modification. Residues K328, K329, and K335 each carry the N6-acetyllysine; alternate modification. Residue K328 is modified to N6-succinyllysine; alternate. Residue K329 is modified to N6-malonyllysine; alternate. The residue at position 335 (K335) is an N6-succinyllysine; alternate.

Belongs to the LDH/MDH superfamily. MDH type 1 family. Homodimer. In terms of processing, acetylation is enhanced after treatment either with trichostin A (TSA) or with nicotinamide (NAM) with the appearance of tri- and tetraacetylations. Glucose also increases acetylation. As to expression, ubiquitously expressed. Highly expressed in skeletal muscle and heart. Also expressed in liver, ileum, colon, kidney and adipose tissue, and at very low levels in lung, pancreas, stomach and spleen.

It is found in the mitochondrion matrix. The catalysed reaction is (S)-malate + NAD(+) = oxaloacetate + NADH + H(+). Its activity is regulated as follows. Enzyme activity is enhanced by acetylation. This is Malate dehydrogenase, mitochondrial from Felis catus (Cat).